The sequence spans 802 residues: Spondin-1 (802 aa).

Positions 1–23 (MAARLRPLALRLLARTFPLVARG) are cleaved as a signal peptide. Positions 24–189 (FSDETLEKAA…DSASEGVTDK (166 aa)) constitute a Reelin domain. Disulfide bonds link cysteine 39–cysteine 123, cysteine 151–cysteine 177, cysteine 194–cysteine 331, cysteine 195–cysteine 335, cysteine 197–cysteine 410, cysteine 438–cysteine 475, cysteine 449–cysteine 484, cysteine 454–cysteine 489, cysteine 497–cysteine 533, cysteine 508–cysteine 512, cysteine 543–cysteine 549, cysteine 554–cysteine 590, cysteine 565–cysteine 569, cysteine 600–cysteine 605, cysteine 610–cysteine 645, cysteine 621–cysteine 625, and cysteine 655–cysteine 660. A Spondin domain is found at 190-383 (PTLDCCACGT…LTSLDHPQSP (194 aa)). Residue asparagine 209 is glycosylated (N-linked (GlcNAc...) asparagine). Aspartate 320, aspartate 349, and aspartate 353 together coordinate Ca(2+). TSP type-1 domains are found at residues 437-490 (TCIY…PGCS), 496-550 (TCMM…EECS), 553-606 (SCLV…PECH), 609-661 (PCLL…PECP), 663-716 (DCEL…RKCL), and 749-801 (VCRL…NVHP). An N-linked (GlcNAc...) asparagine glycan is attached at asparagine 676.

The protein localises to the secreted. The protein resides in the extracellular space. It localises to the extracellular matrix. Functionally, cell adhesion protein that promotes the attachment of spinal cord and sensory neuron cells and the outgrowth of neurites in vitro. May contribute to the growth and guidance of axons in both the spinal cord and the PNS. Somite-derived spondin 1 is an inhibitory signal involved in patterning the segmental migration of neural crest cells and their topographical segregation within the rostral somites in vitro. May be required to prevent the lateral drifting of the commissural axons after having crossed the floor plate. The sequence is that of Spondin-1 (SPON1) from Gallus gallus (Chicken).